We begin with the raw amino-acid sequence, 447 residues long: NADH-ubiquinone oxidoreductase chain 4 (447 aa).

The next 13 helical transmembrane spans lie at 4–24 (LLLL…FMLF), 34–54 (LIIG…LNWI), 67–87 (MYSY…FISL), 100–120 (LLMI…FYLF), 149–169 (MFYT…IYLI), 189–209 (LFIY…FHGW), 223–243 (MILA…LMII), 248–268 (FILI…ILSL), 279–299 (IIAI…MTFL), 304–324 (IGGY…FFLV), 349–371 (MSLL…NLIS), 388–408 (LILM…FMFI), and 422–442 (GILV…LMFL).

This sequence belongs to the complex I subunit 4 family.

Its subcellular location is the mitochondrion membrane. It carries out the reaction a ubiquinone + NADH + 5 H(+)(in) = a ubiquinol + NAD(+) + 4 H(+)(out). Core subunit of the mitochondrial membrane respiratory chain NADH dehydrogenase (Complex I) that is believed to belong to the minimal assembly required for catalysis. Complex I functions in the transfer of electrons from NADH to the respiratory chain. The immediate electron acceptor for the enzyme is believed to be ubiquinone. The chain is NADH-ubiquinone oxidoreductase chain 4 (ND4) from Apis mellifera ligustica (Common honeybee).